Reading from the N-terminus, the 416-residue chain is CinA-like protein (416 aa).

This sequence belongs to the CinA family.

This chain is CinA-like protein, found in Rippkaea orientalis (strain PCC 8801 / RF-1) (Cyanothece sp. (strain PCC 8801)).